The primary structure comprises 116 residues: Cystatin (116 aa).

Residues 53–57 (QLVSG) carry the Secondary area of contact motif. 2 disulfide bridges follow: cysteine 71–cysteine 81 and cysteine 95–cysteine 115. Phosphoserine is present on serine 80.

It belongs to the cystatin family.

Its subcellular location is the secreted. Functionally, this protein binds tightly to and inhibits papain and cathepsin B. This chain is Cystatin, found in Coturnix japonica (Japanese quail).